The sequence spans 402 residues: S-adenosylmethionine synthase (402 aa).

Residue H15 coordinates ATP. Position 17 (D17) interacts with Mg(2+). E43 is a binding site for K(+). Residues E56 and Q99 each coordinate L-methionine. The interval 99-109 (QSPDIAQGVDT) is flexible loop. ATP contacts are provided by residues 174-176 (DGK), 247-248 (RF), D256, 262-263 (RK), A279, and K283. D256 provides a ligand contact to L-methionine. K287 lines the L-methionine pocket.

Belongs to the AdoMet synthase family. In terms of assembly, homotetramer; dimer of dimers. The cofactor is Mg(2+). K(+) is required as a cofactor.

The protein localises to the cytoplasm. The enzyme catalyses L-methionine + ATP + H2O = S-adenosyl-L-methionine + phosphate + diphosphate. Its pathway is amino-acid biosynthesis; S-adenosyl-L-methionine biosynthesis; S-adenosyl-L-methionine from L-methionine: step 1/1. In terms of biological role, catalyzes the formation of S-adenosylmethionine (AdoMet) from methionine and ATP. The overall synthetic reaction is composed of two sequential steps, AdoMet formation and the subsequent tripolyphosphate hydrolysis which occurs prior to release of AdoMet from the enzyme. This Streptomyces coelicolor (strain ATCC BAA-471 / A3(2) / M145) protein is S-adenosylmethionine synthase.